The primary structure comprises 253 residues: Testis-expressed protein 101 (253 aa).

An N-terminal signal peptide occupies residues 1 to 24 (MAACWVHYLLLLLLGVSHQTLAQS). N-linked (GlcNAc...) asparagine glycans are attached at residues Asn44, Asn112, Asn117, Asn121, and Asn162. The region spanning 53-117 (ETCNPGELCQ…SNYCNSSLCN (65 aa)) is the UPAR/Ly6 1 domain. One can recognise a UPAR/Ly6 2 domain in the interval 143–218 (CPTCVALGSC…KETCSYHSLL (76 aa)). Residue Ser226 is the site of GPI-anchor amidated serine attachment. A propeptide spans 227-253 (RASGRSTSLWVLELLLPAVLVALTHFP) (removed in mature form).

As to quaternary structure, interacts with VAMP3. Interacts with LY6K. Interacts with DPEP3; co-localized on the cell surface of spermatocytes, spermatids, and testicular spermatozoa, co-localized only in cytoplasmic droplets of caput and corpus epididymal sperm. Interacts with ADAM5. In terms of processing, N-glycosylated; by high mannose and/or biantennary complex and/or certain types of hybrid oligosaccharides; possesses different oligosaccharides chains according to its subcellular localization in the testis. Post-translationally, sheds from membrane raft by ACE and released from the cell surface of epididymal sperm while it passes through the caput epididymis leading to disappearance of TEX101 on spermatozoa; is essential to produce fertile spermatozoa.

The protein localises to the cell membrane. It is found in the membrane raft. It localises to the cytoplasmic vesicle. Its subcellular location is the secretory vesicle. The protein resides in the acrosome. The protein localises to the secreted. In terms of biological role, plays a role in fertilization by controlling binding of sperm to zona pellucida and migration of spermatozoa into the oviduct. May play a role in signal transduction and promote protein tyrosine phosphorylation. The protein is Testis-expressed protein 101 of Cricetulus griseus (Chinese hamster).